A 677-amino-acid chain; its full sequence is UvrABC system protein B (677 aa).

A Helicase ATP-binding domain is found at 31-417 (DRIESGETDI…SDGVVEQIIR (387 aa)). 44–51 (GATGTGKS) contributes to the ATP binding site. A Beta-hairpin motif is present at residues 97–120 (YYDYYQPEAYVPKTDTFIEKDASV). The region spanning 434–596 (QIDDLLEEIR…VTPVPIKKTV (163 aa)) is the Helicase C-terminal domain. The UVR domain maps to 629 to 664 (KSHIKSLEAKMYMAAESLMFEEAAELRDEIQSLKEK).

Belongs to the UvrB family. In terms of assembly, forms a heterotetramer with UvrA during the search for lesions. Interacts with UvrC in an incision complex.

The protein localises to the cytoplasm. The UvrABC repair system catalyzes the recognition and processing of DNA lesions. A damage recognition complex composed of 2 UvrA and 2 UvrB subunits scans DNA for abnormalities. Upon binding of the UvrA(2)B(2) complex to a putative damaged site, the DNA wraps around one UvrB monomer. DNA wrap is dependent on ATP binding by UvrB and probably causes local melting of the DNA helix, facilitating insertion of UvrB beta-hairpin between the DNA strands. Then UvrB probes one DNA strand for the presence of a lesion. If a lesion is found the UvrA subunits dissociate and the UvrB-DNA preincision complex is formed. This complex is subsequently bound by UvrC and the second UvrB is released. If no lesion is found, the DNA wraps around the other UvrB subunit that will check the other stand for damage. In Tropheryma whipplei (strain TW08/27) (Whipple's bacillus), this protein is UvrABC system protein B.